We begin with the raw amino-acid sequence, 364 residues long: Chorismate synthase (364 aa).

R48 contacts NADP(+). FMN-binding positions include 131–133, 243–244, G288, 303–307, and R329; these read RSS, NA, and KPTSS.

Belongs to the chorismate synthase family. As to quaternary structure, homotetramer. FMNH2 is required as a cofactor.

The enzyme catalyses 5-O-(1-carboxyvinyl)-3-phosphoshikimate = chorismate + phosphate. It functions in the pathway metabolic intermediate biosynthesis; chorismate biosynthesis; chorismate from D-erythrose 4-phosphate and phosphoenolpyruvate: step 7/7. Its function is as follows. Catalyzes the anti-1,4-elimination of the C-3 phosphate and the C-6 proR hydrogen from 5-enolpyruvylshikimate-3-phosphate (EPSP) to yield chorismate, which is the branch point compound that serves as the starting substrate for the three terminal pathways of aromatic amino acid biosynthesis. This reaction introduces a second double bond into the aromatic ring system. In Brucella anthropi (strain ATCC 49188 / DSM 6882 / CCUG 24695 / JCM 21032 / LMG 3331 / NBRC 15819 / NCTC 12168 / Alc 37) (Ochrobactrum anthropi), this protein is Chorismate synthase.